A 341-amino-acid chain; its full sequence is Homeobox protein mls-2 (341 aa).

Disordered stretches follow at residues 1–78 (MPTS…DSTN) and 139–209 (SNPD…TVFS). Polar residues predominate over residues 64 to 78 (TTQSSPSASSEDSTN). Over residues 153 to 166 (KDEKSEGKDGETRD) the composition is skewed to basic and acidic residues. Residues 201–260 (KKKTRTVFSRSQVSQLEMMFECKRYLSSQERSNLAQKLHLTETQVKIWFQNRRNKFKRQA) constitute a DNA-binding region (homeobox).

The protein belongs to the HMX homeobox family. In terms of tissue distribution, expressed in a subset of head neurons, including AIM and ASK (at protein level).

Its subcellular location is the nucleus. Transcription factor that binds to the promoter of target genes. Regulates fate specification and/or differentiation of multiple cell types arising from the embryonic mesodermal (M) lineage and the ABp(l/r)paa precursors. In the postembryonic M lineage, regulates cleavage orientation, cell proliferation and cell fate specification. Regulates hlh-1 expression to specify coelomocyte fate in the mesodermal (M) lineage. In AWC neurons, initiates expression of ceh-36, leading to the expression of terminal differentiation genes. Regulates ventral cephalic sheath (CEPsh) glia differentiation and expression of transcription factor hlh-17 in CEPsh glia. Promotes terminal differentiation and morphogenesis of the epithelial duct and pore cells. In the duct cell, cooperates with the EGF-Ras-ERK pathway in turning on the terminal differentiation gene lin-48. This Caenorhabditis elegans protein is Homeobox protein mls-2.